Here is a 287-residue protein sequence, read N- to C-terminus: MIKLYIISGMSGAGKSQALKIFEDFGFVCVDNIPIQIVADFIDICLKDSIRYKNVAISVDSRAGKSLTSFKDLLIVFKKKNIGYKIIFFNATDSVLLRRYSETRRRHPLGKSVSEGIKLERKIMDRIFTVADEIIDTSDLTIGELKKVISMLADICQSGKQYLNTSILSFGYKYGLPNDADIVYDVRFITNPNYVHGLKFKTGRDEAVRKYIERQKEFSVFFNIFSKLIETTLPGYIKESKSHLTIAIGCTGGQHRSVFTAEKLAGFLKSKKYKVKLNHRDILRHDN.

9-16 (GMSGAGKS) lines the ATP pocket. 60-63 (DSRA) provides a ligand contact to GTP.

It belongs to the RapZ-like family.

Its function is as follows. Displays ATPase and GTPase activities. This chain is Nucleotide-binding protein TGRD_433, found in Endomicrobium trichonymphae.